Reading from the N-terminus, the 101-residue chain is Small ribosomal subunit protein uS14 (101 aa).

It belongs to the universal ribosomal protein uS14 family. As to quaternary structure, part of the 30S ribosomal subunit. Contacts proteins S3 and S10.

Functionally, binds 16S rRNA, required for the assembly of 30S particles and may also be responsible for determining the conformation of the 16S rRNA at the A site. The chain is Small ribosomal subunit protein uS14 from Shewanella oneidensis (strain ATCC 700550 / JCM 31522 / CIP 106686 / LMG 19005 / NCIMB 14063 / MR-1).